The sequence spans 197 residues: Putative NADH dehydrogenase/NAD(P)H nitroreductase Plav_3612 (197 aa).

It belongs to the nitroreductase family. HadB/RutE subfamily. FMN is required as a cofactor.

This is Putative NADH dehydrogenase/NAD(P)H nitroreductase Plav_3612 from Parvibaculum lavamentivorans (strain DS-1 / DSM 13023 / NCIMB 13966).